A 206-amino-acid chain; its full sequence is Guanylate kinase (206 aa).

Residues 13 to 193 (PLLLVVSGPS…AVSEIMSIIS (181 aa)) form the Guanylate kinase-like domain. 20 to 27 (GPSGVGKD) is a binding site for ATP.

The protein belongs to the guanylate kinase family.

It localises to the cytoplasm. The catalysed reaction is GMP + ATP = GDP + ADP. Its function is as follows. Essential for recycling GMP and indirectly, cGMP. In Dehalococcoides mccartyi (strain ATCC BAA-2266 / KCTC 15142 / 195) (Dehalococcoides ethenogenes (strain 195)), this protein is Guanylate kinase.